The sequence spans 85 residues: MIVGVAYAKPTVQVWKHVDVPEGTSAREAIERSGLLAQFPEIDLAVNKVGIFGAICPLDRTLAEGDRVEIYRPIHPEAELLEKKR.

The protein belongs to the UPF0125 (RnfH) family.

The chain is Protein RnfH from Cereibacter sphaeroides (strain ATCC 17023 / DSM 158 / JCM 6121 / CCUG 31486 / LMG 2827 / NBRC 12203 / NCIMB 8253 / ATH 2.4.1.) (Rhodobacter sphaeroides).